Reading from the N-terminus, the 502-residue chain is Probable cytosol aminopeptidase (502 aa).

Mn(2+) contacts are provided by Lys-269 and Asp-274. Residue Lys-281 is part of the active site. Mn(2+)-binding residues include Asp-292, Asp-351, and Glu-353. Arg-355 is a catalytic residue.

Belongs to the peptidase M17 family. Mn(2+) is required as a cofactor.

It localises to the cytoplasm. It carries out the reaction Release of an N-terminal amino acid, Xaa-|-Yaa-, in which Xaa is preferably Leu, but may be other amino acids including Pro although not Arg or Lys, and Yaa may be Pro. Amino acid amides and methyl esters are also readily hydrolyzed, but rates on arylamides are exceedingly low.. The enzyme catalyses Release of an N-terminal amino acid, preferentially leucine, but not glutamic or aspartic acids.. Functionally, presumably involved in the processing and regular turnover of intracellular proteins. Catalyzes the removal of unsubstituted N-terminal amino acids from various peptides. This chain is Probable cytosol aminopeptidase, found in Shewanella denitrificans (strain OS217 / ATCC BAA-1090 / DSM 15013).